Consider the following 2183-residue polypeptide: Coagulation factor V (2183 aa).

An N-terminal signal peptide occupies residues 1–19 (MLLVCPCFFLLVVLGTRWA). 4 consecutive Plastocyanin-like domains span residues 30 to 192 (QLRQ…LLIC), 202 to 328 (TQKM…IKNC), 347 to 524 (KRWE…LLIC), and 534 to 682 (VQRV…DVKC). F5/8 type A domains follow at residues 30–328 (QLRQ…IKNC) and 347–682 (KRWE…DVKC). The Ca(2+) site is built by aspartate 138 and aspartate 139. Asparagine 176, asparagine 238, and asparagine 381 each carry an N-linked (GlcNAc...) asparagine glycan. Threonine 638 bears the Phosphothreonine mark. Residues 691-1533 (SYEIYEPPAP…PDTIAAWYLR (843 aa)) form a b region. A sulfotyrosine mark is found at tyrosine 692 and tyrosine 725. The propeptide at 737 to 1533 (SFKNSSLNPE…PDTIAAWYLR (797 aa)) is activation peptide (connecting region). Asparagine 841 carries an N-linked (GlcNAc...) asparagine glycan. Disordered stretches follow at residues 884-904 (PAGK…MKSE), 947-1045 (DVDK…FPDR), and 1059-1144 (ETAL…YDLS). Residues 892 to 908 (SNPKNSYSGMKSEEDIP) are 1 X 17 AA tandem repeats. Residues 892-911 (SNPKNSYSGMKSEEDIPSEL) form a 1-1 repeat. Serine 903 carries the post-translational modification Phosphoserine. Residues 951–975 (LTNSPQNQNITVPRGESTSHTNTTR) show a composition bias toward polar residues. Asparagine 959 and asparagine 972 each carry an N-linked (GlcNAc...) asparagine glycan. Residues 1010 to 1021 (RTRKKKKNKKLA) are compositionally biased toward basic residues. Composition is skewed to polar residues over residues 1059 to 1099 (ETAL…SLDL) and 1120 to 1134 (THST…SPPE). Repeat copies occupy residues 1175-1183 (IPSSDLSLF), 1184-1192 (TISPELDQT), 1193-1201 (IIYPDLDQL), 1202-1210 (LLSPEDNQK), 1211-1219 (TSSPDLGQV), 1220-1228 (PLSPDDNQK), 1229-1237 (TSSPDLGQV), 1238-1246 (SLSPDDNQK), 1247-1255 (TSSPDLGQV), 1256-1264 (PLSLDDNQK), 1265-1273 (TTSPDLGQV), 1274-1282 (PLSPDDNQM), 1283-1291 (ITSPDLGQV), 1292-1299 (PLSSDNQK), 1300-1308 (TSSPDLGQV), 1309-1316 (PLFPEDNQ), 1317-1325 (NYFLDLSQV), 1326-1334 (PLSSDQNQE), 1335-1341 (TSSTDLL), 1342-1350 (TLSPDFGQT), 1351-1359 (VLSPDLDQL), 1360-1368 (PLPSDNSQV), 1369-1377 (TVSPDLSLL), 1378-1386 (TLSPDFNEI), 1387-1395 (ILAPDLGQV), 1396-1404 (TLSPDLIQT), 1405-1413 (NPALNHGHK), 1414-1422 (ASSADPDQA), 1423-1431 (SYPPDSGQA), 1432-1440 (SSLPELNRT), 1441-1449 (LPHPDLTHI), and 1452-1461 (PSPSPTLNNT). The tract at residues 1175 to 1461 (IPSSDLSLFT…PSPSPTLNNT (287 aa)) is 32 X 9 AA approximate tandem repeats of [TNP]-L-S-P-D-L-S-Q-T. The tract at residues 1204–1312 (SPEDNQKTSS…PDLGQVPLFP (109 aa)) is disordered. Polar residues predominate over residues 1228–1251 (KTSSPDLGQVSLSPDDNQKTSSPD). Positions 1292–1304 (PLSSDNQKTSSPD) are enriched in polar residues. The tract at residues 1403-1462 (QTNPALNHGHKASSADPDQASYPPDSGQASSLPELNRTLPHPDLTHIPPPSPSPTLNNTS) is disordered. Asparagine 1438 is a glycosylation site (N-linked (GlcNAc...) asparagine). 2 Plastocyanin-like domains span residues 1538–1711 (HKKF…LLIC) and 1721–1866 (NLPM…DKEC). Residues 1538–1866 (HKKFYYIAAE…TPFLIIDKEC (329 aa)) enclose the F5/8 type A 3 domain. Cu cation-binding residues include histidine 1802 and histidine 1804. An N-linked (GlcNAc...) asparagine glycan is attached at asparagine 1811. F5/8 type C domains are found at residues 1866–2020 (CKMP…LQGC) and 2025–2180 (CSTP…LFGC). 2 disulfide bridges follow: cysteine 1866–cysteine 2020 and cysteine 2025–cysteine 2180.

It belongs to the multicopper oxidase family. In terms of assembly, factor Va, the activated form of factor V, is composed of a heavy chain and a light chain, non-covalently bound. The interaction between the two chains is calcium-dependent. Forms heterodimer with SERPINA5. Thrombin activates factor V proteolytically to the active cofactor, factor Va (formation of a heavy chain at the N-terminus and a light chain at the C-terminus). In terms of processing, sulfation is required for efficient thrombin cleavage and activation and for full procoagulant activity. Post-translationally, activated protein C inactivates factor V and factor Va by proteolytic degradation.

It is found in the secreted. With respect to regulation, inhibited by SERPINA5. Its function is as follows. Central regulator of hemostasis. It serves as a critical cofactor for the prothrombinase activity of factor Xa that results in the activation of prothrombin to thrombin. In Mus musculus (Mouse), this protein is Coagulation factor V (F5).